An 80-amino-acid polypeptide reads, in one-letter code: MGGGSQVEGERALVQVLVRDNNVDQALKALKKKMQREGVFREMKLRRNFEKPSEKRAREKAEAVRRARKLERKRLEREGF.

The protein belongs to the bacterial ribosomal protein bS21 family.

This is Small ribosomal subunit protein bS21 from Rhodospirillum rubrum (strain ATCC 11170 / ATH 1.1.1 / DSM 467 / LMG 4362 / NCIMB 8255 / S1).